The primary structure comprises 374 residues: 8-amino-7-oxononanoate synthase (374 aa).

Substrate is bound by residues R22 and R29. 109 to 110 (GY) contacts pyridoxal 5'-phosphate. H134 provides a ligand contact to substrate. Pyridoxal 5'-phosphate contacts are provided by residues S182, 207-210 (DDAH), and 227-230 (TLSK). N6-(pyridoxal phosphate)lysine is present on K230. T339 is a substrate binding site.

The protein belongs to the class-II pyridoxal-phosphate-dependent aminotransferase family. BioF subfamily. In terms of assembly, homodimer. Pyridoxal 5'-phosphate is required as a cofactor.

It catalyses the reaction 6-carboxyhexanoyl-[ACP] + L-alanine + H(+) = (8S)-8-amino-7-oxononanoate + holo-[ACP] + CO2. Its pathway is cofactor biosynthesis; biotin biosynthesis. Catalyzes the decarboxylative condensation of pimeloyl-[acyl-carrier protein] and L-alanine to produce 8-amino-7-oxononanoate (AON), [acyl-carrier protein], and carbon dioxide. This chain is 8-amino-7-oxononanoate synthase, found in Methylobacterium radiotolerans (strain ATCC 27329 / DSM 1819 / JCM 2831 / NBRC 15690 / NCIMB 10815 / 0-1).